The chain runs to 798 residues: Cation channel sperm-associated auxiliary subunit delta (798 aa).

Residues 1-20 (MLMLMLVAAVTMWLRPLVTA) form the signal peptide. Topologically, residues 21–723 (QLCRSRTVRT…AFPVQLVSAG (703 aa)) are extracellular. Disulfide bonds link Cys23-Cys369, Cys59-Cys145, Cys144-Cys152, Cys387-Cys496, Cys510-Cys701, Cys525-Cys572, and Cys624-Cys652. The N-linked (GlcNAc...) asparagine glycan is linked to Asn123. N-linked (GlcNAc...) asparagine glycans are attached at residues Asn230, Asn240, Asn472, Asn538, and Asn630. The helical transmembrane segment at 724–745 (VVILLIISSILGSVWLAYKTPK) threads the bilayer. The Cytoplasmic segment spans residues 746 to 798 (LLRTARGRRIKKCATQLCRRCKTVCQFRASATARAGTEPPGRHRTPHGGRSDH).

It belongs to the CATSPERD family. In terms of assembly, component of the CatSper complex or CatSpermasome composed of the core pore-forming members CATSPER1, CATSPER2, CATSPER3 and CATSPER4 as well as auxiliary members CATSPERB, CATSPERG, CATSPERD, CATSPERE, CATSPERZ, C2CD6/CATSPERT, TMEM249, TMEM262 and EFCAB9. HSPA1 may be an additional auxiliary complex member. The core complex members CATSPER1, CATSPER2, CATSPER3 and CATSPER4 form a heterotetrameric channel. The auxiliary CATSPERB, CATSPERG, CATSPERD and CATSPERE subunits form a pavilion-like structure over the pore which stabilizes the complex through interactions with CATSPER4, CATSPER3, CATSPER1 and CATSPER2 respectively. TMEM262/CATSPERH interacts with CATSPERB, further stabilizing the complex. C2CD6/CATSPERT interacts at least with CATSPERD and is required for targeting the CatSper complex in the flagellar membrane.

Its subcellular location is the cell projection. It is found in the cilium. The protein resides in the flagellum membrane. Its function is as follows. Auxiliary component of the CatSper complex, a complex involved in sperm cell hyperactivation. Sperm cell hyperactivation is needed for sperm motility which is essential late in the preparation of sperm for fertilization. Required for CATSPER1 stability before intraflagellar transport and/or incorporation of the CatSper complex channel into the flagellar membrane. The protein is Cation channel sperm-associated auxiliary subunit delta of Homo sapiens (Human).